Here is a 534-residue protein sequence, read N- to C-terminus: 2,3-bisphosphoglycerate-independent phosphoglycerate mutase (534 aa).

Mn(2+) contacts are provided by Asp-15 and Ser-65. The active-site Phosphoserine intermediate is Ser-65. Substrate contacts are provided by residues His-126, 156–157 (RD), Arg-188, Arg-194, 261–264 (RPDR), and Lys-334. Asp-401, His-405, Asp-442, His-443, and His-460 together coordinate Mn(2+).

Belongs to the BPG-independent phosphoglycerate mutase family. Mn(2+) serves as cofactor.

The protein localises to the plastid. It is found in the chloroplast. It carries out the reaction (2R)-2-phosphoglycerate = (2R)-3-phosphoglycerate. The protein operates within carbohydrate degradation; glycolysis; pyruvate from D-glyceraldehyde 3-phosphate: step 3/5. Its function is as follows. Catalyzes the interconversion of 2-phosphoglycerate and 3-phosphoglycerate. The protein is 2,3-bisphosphoglycerate-independent phosphoglycerate mutase of Pyropia yezoensis (Susabi-nori).